Reading from the N-terminus, the 718-residue chain is Cyclomaltodextrin glucanotransferase (718 aa).

The signal sequence occupies residues 1 to 34; that stretch reads MFQMAKRAFLSTTLTLGLLAGSALPFLPASAAYA. An A1 region spans residues 35–172; sequence DPDIAVTNKQ…GIKIIIDFAP (138 aa). Positions 61, 63, 66, and 67 each coordinate Ca(2+). A disulfide bridge links Cys-77 with Cys-84. Ca(2+)-binding residues include Gly-85 and Asp-87. Substrate is bound at residue 134–135; it reads YW. Position 173 (Asn-173) interacts with Ca(2+). Positions 173 to 236 are b; that stretch reads NHTSPAMETD…NLYDLADFNH (64 aa). His-174 serves as a coordination point for substrate. Ile-224 lines the Ca(2+) pocket. 227–230 lines the substrate pocket; it reads NLYD. Asp-233 serves as a coordination point for Ca(2+). The tract at residues 237–440 is A2; that stretch reads NNATIDKYFK…LRKSNPAIAY (204 aa). Arg-261 contributes to the substrate binding site. Catalysis depends on Asp-263, which acts as the Nucleophile. Residue 266–267 coordinates substrate; sequence KH. His-267 provides a ligand contact to Ca(2+). Glu-291 serves as the catalytic Proton donor. Positions 361, 405, and 409 each coordinate substrate. Positions 441–528 are c; the sequence is GSTQQRWINN…ATAVWQYTAA (88 aa). A d region spans residues 529–614; sequence ETTPTIGHVG…SNAYNHFTIL (86 aa). The region spanning 532-612 is the IPT/TIG domain; that stretch reads PTIGHVGPVM…VNSNAYNHFT (81 aa). Positions 613–718 constitute a CBM20 domain; sequence ILTGDQVTVR…GTATVTVNWQ (106 aa). Residues 615–718 form an e region; the sequence is TGDQVTVRFV…GTATVTVNWQ (104 aa).

This sequence belongs to the glycosyl hydrolase 13 family. Monomer. It depends on Ca(2+) as a cofactor.

Its subcellular location is the secreted. It carries out the reaction Cyclizes part of a (1-&gt;4)-alpha-D-glucan chain by formation of a (1-&gt;4)-alpha-D-glucosidic bond.. The chain is Cyclomaltodextrin glucanotransferase (cgt) from Bacillus sp. (strain 6.6.3).